The sequence spans 76 residues: Small ribosomal subunit protein uS17 (76 aa).

This sequence belongs to the universal ribosomal protein uS17 family. As to quaternary structure, part of the 30S ribosomal subunit.

Its function is as follows. One of the primary rRNA binding proteins, it binds specifically to the 5'-end of 16S ribosomal RNA. In Ruegeria sp. (strain TM1040) (Silicibacter sp.), this protein is Small ribosomal subunit protein uS17.